The sequence spans 461 residues: Flavin-containing monooxygenase FMO GS-OX4 (461 aa).

17–22 (GAGAAG) serves as a coordination point for FAD. 211–216 (GNFASG) is an NADP(+) binding site.

It belongs to the FMO family.

It catalyses the reaction a (Z)-omega-(methylsulfanyl)-N-sulfo-alkylhydroximate S-glucoside + NADPH + O2 + H(+) = a (Z)-omega-(methylsulfinyl)-alkyl-glucosinolate + NADP(+) + H2O. Catalyzes the conversion of methylthioalkyl glucosinolates of any chain length into methylsulfinylalkyl glucosinolates. The sequence is that of Flavin-containing monooxygenase FMO GS-OX4 (FMOGS-OX4) from Arabidopsis thaliana (Mouse-ear cress).